Reading from the N-terminus, the 430-residue chain is MGPRRLLIVALGLSLCGPLLSSRVPMSQPESERTDATVNPRSFFLRNPSENTFELVPLGDEEEEEKNESVLLEGRAVYLNISLPPHTPPPPFISEDASGYLTSPWLTLFMPSVYTIVFIVSLPLNVLAIAVFVLRMKVKKPAVVYMLHLAMADVLFVSVLPFKISYYFSGTDWQFGSGMCRFATAAFYGNMYASIMLMTVISIDRFLAVVYPIQSLSWRTLGRANFTCVVIWVMAIMGVVPLLLKEQTTRVPGLNITTCHDVLSENLMQGFYSYYFSAFSAIFFLVPLIVSTVCYTSIIRCLSSSAVANRSKKSRALFLSAAVFCIFIVCFGPTNVLLIVHYLFLSDSPGTEAAYFAYLLCVCVSSVSCCIDPLIYYYASSECQRHLYSILCCKESSDPNSCNSTGQLMPSKMDTCSSHLNNSIYKKLLA.

The signal sequence occupies residues 1-21 (MGPRRLLIVALGLSLCGPLLS). The propeptide at 22–41 (SRVPMSQPESERTDATVNPR) is removed for receptor activation. At 42–107 (SFFLRNPSEN…SGYLTSPWLT (66 aa)) the chain is on the extracellular side. N67 and N80 each carry an N-linked (GlcNAc...) asparagine glycan. The helical transmembrane segment at 108–133 (LFMPSVYTIVFIVSLPLNVLAIAVFV) threads the bilayer. At 134–142 (LRMKVKKPA) the chain is on the cytoplasmic side. The helical transmembrane segment at 143 to 162 (VVYMLHLAMADVLFVSVLPF) threads the bilayer. Residues 163 to 181 (KISYYFSGTDWQFGSGMCR) are Extracellular-facing. A disulfide bridge connects residues C180 and C259. Residues 182-203 (FATAAFYGNMYASIMLMTVISI) form a helical membrane-spanning segment. The Cytoplasmic portion of the chain corresponds to 204 to 223 (DRFLAVVYPIQSLSWRTLGR). The chain crosses the membrane as a helical span at residues 224 to 244 (ANFTCVVIWVMAIMGVVPLLL). Residues 245 to 273 (KEQTTRVPGLNITTCHDVLSENLMQGFYS) are Extracellular-facing. N255 is a glycosylation site (N-linked (GlcNAc...) asparagine). The helical transmembrane segment at 274–293 (YYFSAFSAIFFLVPLIVSTV) threads the bilayer. The Cytoplasmic portion of the chain corresponds to 294 to 316 (CYTSIIRCLSSSAVANRSKKSRA). The helical transmembrane segment at 317 to 339 (LFLSAAVFCIFIVCFGPTNVLLI) threads the bilayer. The Extracellular portion of the chain corresponds to 340–354 (VHYLFLSDSPGTEAA). The chain crosses the membrane as a helical span at residues 355–379 (YFAYLLCVCVSSVSCCIDPLIYYYA). Topologically, residues 380-430 (SSECQRHLYSILCCKESSDPNSCNSTGQLMPSKMDTCSSHLNNSIYKKLLA) are cytoplasmic. Residue S423 is modified to Phosphoserine.

The protein belongs to the G-protein coupled receptor 1 family. Proteolytic cleavage by thrombin generates a new N-terminus that functions as a tethered ligand. Also proteolytically cleaved by cathepsin CTSG. In terms of processing, phosphorylated in the C-terminal tail; probably mediating desensitization prior to the uncoupling and internalization of the receptor.

It localises to the cell membrane. High affinity receptor that binds the activated thrombin, leading to calcium release from intracellular stores. The thrombin-activated receptor signaling pathway is mediated through PTX-insensitive G proteins, activation of phospholipase C resulting in the production of 1D-myo-inositol 1,4,5-trisphosphate (InsP3) which binds to InsP3 receptors causing calcium release from the stores. In astrocytes, the calcium released into the cytosol allows the Ca(2+)-dependent release of L-glutamate into the synaptic cleft through BEST1, that targets the neuronal postsynaptic GRIN2A/NMDAR receptor resulting in the synaptic plasticity regulation. May play a role in platelets activation and in vascular development. Mediates up-regulation of pro-inflammatory cytokines, such as MCP-1/CCL2 and IL6, triggered by coagulation factor Xa (F10) in cardiac fibroblasts and umbilical vein endothelial cells. The sequence is that of Proteinase-activated receptor 1 from Mus musculus (Mouse).